The sequence spans 717 residues: Polyribonucleotide nucleotidyltransferase (717 aa).

Positions 488 and 494 each coordinate Mg(2+). Positions 555–614 (PRIEVMNIPVDKIREVIGSGGKVIREIVEKTGAKINIDDDGTVKIASASAKEIEAARKWI) constitute a KH domain. The S1 motif domain occupies 624–692 (GQVYEGTVVK…ERGKVRLSMK (69 aa)).

Belongs to the polyribonucleotide nucleotidyltransferase family. Requires Mg(2+) as cofactor.

The protein resides in the cytoplasm. The catalysed reaction is RNA(n+1) + phosphate = RNA(n) + a ribonucleoside 5'-diphosphate. Its function is as follows. Involved in mRNA degradation. Catalyzes the phosphorolysis of single-stranded polyribonucleotides processively in the 3'- to 5'-direction. In Rhizobium meliloti (strain 1021) (Ensifer meliloti), this protein is Polyribonucleotide nucleotidyltransferase.